Here is a 208-residue protein sequence, read N- to C-terminus: Guanylate kinase (208 aa).

The Guanylate kinase-like domain occupies 4–185; that stretch reads GNLYIISAPS…ALVDLEHILR (182 aa). ATP is bound at residue 11–18; that stretch reads APSGAGKS.

It belongs to the guanylate kinase family.

The protein resides in the cytoplasm. It catalyses the reaction GMP + ATP = GDP + ADP. Its function is as follows. Essential for recycling GMP and indirectly, cGMP. The protein is Guanylate kinase of Histophilus somni (strain 129Pt) (Haemophilus somnus).